Reading from the N-terminus, the 145-residue chain is SsrA-binding protein (145 aa).

The protein belongs to the SmpB family.

The protein localises to the cytoplasm. Functionally, required for rescue of stalled ribosomes mediated by trans-translation. Binds to transfer-messenger RNA (tmRNA), required for stable association of tmRNA with ribosomes. tmRNA and SmpB together mimic tRNA shape, replacing the anticodon stem-loop with SmpB. tmRNA is encoded by the ssrA gene; the 2 termini fold to resemble tRNA(Ala) and it encodes a 'tag peptide', a short internal open reading frame. During trans-translation Ala-aminoacylated tmRNA acts like a tRNA, entering the A-site of stalled ribosomes, displacing the stalled mRNA. The ribosome then switches to translate the ORF on the tmRNA; the nascent peptide is terminated with the 'tag peptide' encoded by the tmRNA and targeted for degradation. The ribosome is freed to recommence translation, which seems to be the essential function of trans-translation. The polypeptide is SsrA-binding protein (Mycoplasmopsis pulmonis (strain UAB CTIP) (Mycoplasma pulmonis)).